The chain runs to 446 residues: Tubulin beta-2 chain (446 aa).

GTP-binding residues include glutamine 11, glutamate 69, serine 138, glycine 142, threonine 143, glycine 144, asparagine 204, and asparagine 226. Glutamate 69 is a Mg(2+) binding site. Positions 426 to 446 (QEAGIDEEEEYEEEAPAEHEE) are disordered. The segment covering 429–440 (GIDEEEEYEEEA) has biased composition (acidic residues).

The protein belongs to the tubulin family. Dimer of alpha and beta chains. A typical microtubule is a hollow water-filled tube with an outer diameter of 25 nm and an inner diameter of 15 nM. Alpha-beta heterodimers associate head-to-tail to form protofilaments running lengthwise along the microtubule wall with the beta-tubulin subunit facing the microtubule plus end conferring a structural polarity. Microtubules usually have 13 protofilaments but different protofilament numbers can be found in some organisms and specialized cells. Mg(2+) serves as cofactor.

The protein resides in the cytoplasm. Its subcellular location is the cytoskeleton. Functionally, tubulin is the major constituent of microtubules, a cylinder consisting of laterally associated linear protofilaments composed of alpha- and beta-tubulin heterodimers. Microtubules grow by the addition of GTP-tubulin dimers to the microtubule end, where a stabilizing cap forms. Below the cap, tubulin dimers are in GDP-bound state, owing to GTPase activity of alpha-tubulin. The chain is Tubulin beta-2 chain from Hypocrea virens (Gliocladium virens).